Reading from the N-terminus, the 260-residue chain is Type II methyltransferase M1.MboII (260 aa).

Residues C12, D30, K197, 223-225 (SGT), and 241-242 (DM) contribute to the S-adenosyl-L-methionine site.

It belongs to the N(4)/N(6)-methyltransferase family. At low concentration exists as a monomer and homodimer. Probably binds to DNA as a monomer.

It catalyses the reaction a 2'-deoxyadenosine in DNA + S-adenosyl-L-methionine = an N(6)-methyl-2'-deoxyadenosine in DNA + S-adenosyl-L-homocysteine + H(+). In terms of biological role, a beta subtype methylase that recognizes the double-stranded sequence 5'-GAAGA-3', methylates A-5 on the top strand, and protects the DNA from cleavage by the MboII endonuclease. It is not known if the cytosine of the complementary sequence TCTTC is also methylated by this enzyme. This is Type II methyltransferase M1.MboII from Moraxella bovis.